Here is a 288-residue protein sequence, read N- to C-terminus: Serine/threonine-protein acetyltransferase YopJ (288 aa).

Active-site residues include His109 and Glu128. Residue His109 participates in CoA binding. 167-168 (RS) is a CoA binding site. The active site involves Cys172. 1D-myo-inositol hexakisphosphate is bound by residues 182-185 (KLYI) and 224-225 (KH). 227 to 230 (QGKK) contacts CoA. 1D-myo-inositol hexakisphosphate is bound at residue Arg257. 266–270 (DGKEL) lines the CoA pocket.

This sequence belongs to the acetyltransferase YopJ family. Requires 1D-myo-inositol hexakisphosphate as cofactor.

Its subcellular location is the secreted. The catalysed reaction is L-threonyl-[protein] + acetyl-CoA = O-acetyl-L-threonyl-[protein] + CoA. The enzyme catalyses L-seryl-[protein] + acetyl-CoA = O-acetyl-L-seryl-[protein] + CoA. 1D-myo-inositol hexakisphosphate activates protein-acetyltransferase activity via an allosteric mechanism: 1D-myo-inositol hexakisphosphate-binding induces a conformational rearrangement that stimulates the interaction with acetyl-CoA. Functionally, serine/threonine-protein acetyltransferase translocated into infected cells, which inhibits the host immune response and induces cell death by mediating acetylation of target proteins. Inhibits the MAPK and NF-kappa-B signaling pathways by acetylating protein-kinases such as MAP2K1, MAP2K6, MAP3K7/TAK1 and I-kappa-B kinase (CHUK/IKKA and IKBKB) on serine and threonine residues critical for their activation by phosphorylation, thereby preventing protein-kinase activation. Promotes pyroptosis, a programmed cell death, in host cells by mediating acetylation of MAP3K7/TAK1: MAP3K7/TAK1 inactivation triggers activation of caspase-8 (CASP8), followed by CASP8-dependent cleavage of gasdermin-D (GSDMD) and induction of pyroptosis. The sequence is that of Serine/threonine-protein acetyltransferase YopJ from Yersinia pestis.